We begin with the raw amino-acid sequence, 407 residues long: Lymphocyte transmembrane adapter 1 (407 aa).

The segment at Met-1 to Gly-25 is disordered. Residues Met-1 to Gln-33 are Extracellular-facing. Over residues Glu-16–Gly-25 the composition is skewed to polar residues. The chain crosses the membrane as a helical; Signal-anchor for type III membrane protein span at residues Ile-34 to Ile-54. Residues Leu-55–Ala-407 lie on the Cytoplasmic side of the membrane. A disordered region spans residues Glu-109–Gln-131. Residues Tyr-185, Tyr-260, Tyr-286, and Tyr-353 each carry the phosphotyrosine modification. Residues Ser-331–Leu-388 are disordered.

In terms of assembly, when phosphorylated, interacts with GRB2, PIK3R1 and GRAP2. Phosphorylated on tyrosines upon TCR or BCR activation; which leads to the recruitment of GRB2, PIK3R1 and GRAP2. In terms of tissue distribution, expressed in T-cells and B-cells.

It localises to the cell membrane. Negatively regulates TCR (T-cell antigen receptor)-mediated signaling in T-cells and BCR (B-cell antigen receptor)-mediated signaling in B-cells. The protein is Lymphocyte transmembrane adapter 1 (Lax1) of Mus musculus (Mouse).